Reading from the N-terminus, the 1178-residue chain is Mannosyltransferase regulator 4 (1178 aa).

Residues 1–27 (MLQRISSKLHRRFLSGLLRVKHYPLRR) are Cytoplasmic-facing. The helical; Signal-anchor for type II membrane protein transmembrane segment at 28-48 (ILLPLILLQIIIITFIWSNSP) threads the bilayer. The Lumenal portion of the chain corresponds to 49–1178 (QRNGLGRDAD…KKKQEEGHSN (1130 aa)). The DXD signature appears at 519–521 (DFD). Positions 1041 to 1178 (EKKKKEEEEK…KKKQEEGHSN (138 aa)) are disordered. Tandem repeats lie at residues 1042 to 1049 (KKKKEEEE), 1050 to 1057 (KKKKEEEE), 1058 to 1065 (KKKKEEEE), 1066 to 1073 (KKKKEEEE), 1074 to 1081 (KKKKEEEE), and 1082 to 1089 (KKKKEEEE). A 17 X 8 AA tandem repeats of K-K-K-K-E-E-E-E region spans residues 1042–1174 (KKKKEEEEKK…EEEEKKKQEE (133 aa)). The 7; approximate repeat unit spans residues 1090 to 1097 (KKKQEEEE). Copy 8 of the repeat occupies 1098–1105 (KKKKEEEE). A 9; approximate repeat occupies 1106–1113 (KKKQEEGE). Residues 1114–1121 (KMKNEDEE) form a 10; approximate repeat. The stretch at 1122–1129 (NKKNEDEE) is one 11; approximate repeat. Copy 12 of the repeat occupies 1130–1137 (KKKNEEEE). One copy of the 13; approximate repeat lies at 1138–1144 (KKKQEEK). One copy of the 14; approximate repeat lies at 1145-1152 (NKKNEDEE). One copy of the 15; approximate repeat lies at 1153-1160 (KKKQEEEE). A 16; approximate repeat occupies 1161–1168 (KKKNEEEE). A 17; truncated repeat occupies 1169–1174 (KKKQEE).

Belongs to the MNN4 family.

Its subcellular location is the golgi apparatus membrane. In terms of biological role, golgi apparatus protein involved in N-glycan mannosylphosphorylation. While MNN4 seems to have a regulatory role in N-glycan mannosylphosphorylation, a transferase activity of MNN4 can not be ruled out. Mediates mannosylphosphate transfer in both the core and outer chain portions of N-linked oligosaccharides. Has partially redundant function with MNN14. The protein is Mannosyltransferase regulator 4 of Saccharomyces cerevisiae (strain ATCC 204508 / S288c) (Baker's yeast).